Consider the following 217-residue polypeptide: Pyridoxine/pyridoxamine 5'-phosphate oxidase (217 aa).

Substrate is bound by residues 13–16 (RREY) and lysine 71. FMN-binding positions include 66–71 (RIVLLK), 81–82 (YT), arginine 87, lysine 88, and glutamine 110. Residues tyrosine 128, arginine 132, and serine 136 each coordinate substrate. FMN-binding positions include 145–146 (QS) and tryptophan 190. 196–198 (RLH) is a substrate binding site. Arginine 200 contributes to the FMN binding site.

Belongs to the pyridoxamine 5'-phosphate oxidase family. In terms of assembly, homodimer. FMN serves as cofactor.

The catalysed reaction is pyridoxamine 5'-phosphate + O2 + H2O = pyridoxal 5'-phosphate + H2O2 + NH4(+). The enzyme catalyses pyridoxine 5'-phosphate + O2 = pyridoxal 5'-phosphate + H2O2. Its pathway is cofactor metabolism; pyridoxal 5'-phosphate salvage; pyridoxal 5'-phosphate from pyridoxamine 5'-phosphate: step 1/1. It participates in cofactor metabolism; pyridoxal 5'-phosphate salvage; pyridoxal 5'-phosphate from pyridoxine 5'-phosphate: step 1/1. Functionally, catalyzes the oxidation of either pyridoxine 5'-phosphate (PNP) or pyridoxamine 5'-phosphate (PMP) into pyridoxal 5'-phosphate (PLP). The chain is Pyridoxine/pyridoxamine 5'-phosphate oxidase from Serratia proteamaculans (strain 568).